The sequence spans 189 residues: MTKLLVGLGNPGDKYFETKHNVGFMLIDQLAKKQNVTFTHDKIFQADLASFFLNGEKIYLVKPTTFMNESGKAVHALLTYYGLDIDDLLIIYDDLDMEVGKIRLRAKGSAGGHNGIKSIIQHIGTQVFNRVKIGIGRPKNGMSVVHHVLSKFDRDDYIGILQSIDKVDDSVNYYLQEKKFEKTMQRYNG.

Residue Y15 coordinates tRNA. H20 serves as the catalytic Proton acceptor. Residues F66, N68, and N114 each contribute to the tRNA site.

Belongs to the PTH family. As to quaternary structure, monomer.

The protein localises to the cytoplasm. The catalysed reaction is an N-acyl-L-alpha-aminoacyl-tRNA + H2O = an N-acyl-L-amino acid + a tRNA + H(+). Functionally, hydrolyzes ribosome-free peptidyl-tRNAs (with 1 or more amino acids incorporated), which drop off the ribosome during protein synthesis, or as a result of ribosome stalling. Catalyzes the release of premature peptidyl moieties from peptidyl-tRNA molecules trapped in stalled 50S ribosomal subunits, and thus maintains levels of free tRNAs and 50S ribosomes. This chain is Peptidyl-tRNA hydrolase, found in Streptococcus pneumoniae serotype 2 (strain D39 / NCTC 7466).